The primary structure comprises 573 residues: MFRLPVSLARSSISRQLAMRGYAKDVRFGPEVRAMMLQGVDVLADAVAVTMGPKGRNVIIEQSWGSPKITKDGVTVAKSIELKDKFQNIGAKLVQDVANNTNEEAGDGTTTATVLARAIAKEGFEKISKGANPVEIRRGVMLAVETVKDNLKTMSRPVSTPEEIAQVATISANGDQAIGNLISEAMKKVGRDGVITVKDGKTLTDELEVIEGMKFDRGYISPYFINSSKGAKVEFQDALLLLSEKKISSVQSIIPALELANAQRKPLVIIAEDIDGEALSTLVVNRLKIGLQVAAVKAPGFGDNRKSTLTDMAIASGGIVFGDDADLVKLEDVKVSDLGQVGEVVITKDDTLLLKGKGKKDDVLRRANQIKDQIEDTTSEYEKEKLQERLARLASGVALLRVGGSSEVEVNEKKDRVHDALNATRAAVEEGIVPGGGTALLRCIEKLEGVETTNEDQKLGVEIVRRALRMPCMTIAKNAGVDGAMVVAKVENQAGDYGYDALKGEYGNLIEKGIIDPTKVVRTAITDASGVASLLTTAEAVVTEIPKEDGAPAMPGMGGMGGMGGMGGMGGMM.

The transit peptide at 1-57 (MFRLPVSLARSSISRQLAMRGYAKDVRFGPEVRAMMLQGVDVLADAVAVTMGPKGRN) directs the protein to the mitochondrion.

It belongs to the chaperonin (HSP60) family.

It localises to the mitochondrion matrix. Prevents misfolding and promotes the refolding and proper assembly of unfolded polypeptides generated under stress conditions. This chain is Heat shock protein 60A, found in Drosophila melanogaster (Fruit fly).